A 201-amino-acid chain; its full sequence is Holliday junction branch migration complex subunit RuvA (201 aa).

Residues 1–64 (MIGRLRGTLA…EDAQLLYGFA (64 aa)) are domain I. Positions 65–143 (EKRERELFRE…AWESMPAIAT (79 aa)) are domain II. The interval 144 to 152 (LVVEPGSKT) is flexible linker. Residues 153-201 (AVTSAENDAVSALISLGFKPQEASRAVSAIQEENLSSEEMIRRALKGMV) are domain III.

This sequence belongs to the RuvA family. In terms of assembly, homotetramer. Forms an RuvA(8)-RuvB(12)-Holliday junction (HJ) complex. HJ DNA is sandwiched between 2 RuvA tetramers; dsDNA enters through RuvA and exits via RuvB. An RuvB hexamer assembles on each DNA strand where it exits the tetramer. Each RuvB hexamer is contacted by two RuvA subunits (via domain III) on 2 adjacent RuvB subunits; this complex drives branch migration. In the full resolvosome a probable DNA-RuvA(4)-RuvB(12)-RuvC(2) complex forms which resolves the HJ.

It is found in the cytoplasm. Its function is as follows. The RuvA-RuvB-RuvC complex processes Holliday junction (HJ) DNA during genetic recombination and DNA repair, while the RuvA-RuvB complex plays an important role in the rescue of blocked DNA replication forks via replication fork reversal (RFR). RuvA specifically binds to HJ cruciform DNA, conferring on it an open structure. The RuvB hexamer acts as an ATP-dependent pump, pulling dsDNA into and through the RuvAB complex. HJ branch migration allows RuvC to scan DNA until it finds its consensus sequence, where it cleaves and resolves the cruciform DNA. The chain is Holliday junction branch migration complex subunit RuvA from Stutzerimonas stutzeri (strain A1501) (Pseudomonas stutzeri).